Here is a 387-residue protein sequence, read N- to C-terminus: Dual specificity protein phosphatase MPK-4 (387 aa).

Residues 1–15 (MEQSQSQRQAWPSSS) show a composition bias toward polar residues. The tract at residues 1–27 (MEQSQSQRQAWPSSSAGGGKAQDSGVL) is disordered. The Tyrosine-protein phosphatase domain occupies 35 to 182 (GPVSIDEVDT…LKLFRRMGCK (148 aa)). Cys126 acts as the Phosphocysteine intermediate in catalysis. The interval 248 to 267 (LEHKPRDRPPQEVVPKEKEE) is disordered.

Belongs to the protein-tyrosine phosphatase family. Non-receptor class dual specificity subfamily. In terms of assembly, interacts (via tyrosine-protein phosphatase domain) with bsk/JNK; the interaction dephosphorylates bsk.

Its subcellular location is the nucleus. The protein resides in the cytoplasm. It carries out the reaction O-phospho-L-tyrosyl-[protein] + H2O = L-tyrosyl-[protein] + phosphate. The catalysed reaction is O-phospho-L-seryl-[protein] + H2O = L-seryl-[protein] + phosphate. The enzyme catalyses O-phospho-L-threonyl-[protein] + H2O = L-threonyl-[protein] + phosphate. Its activity is regulated as follows. Inhibited by the tyrosine phosphatase inhibitor sodium vanadate. Dual specificity phosphatase; can dephosphorylate both phosphotyrosine and phosphoserine or phosphothreonine residues. May suppress bsk/JNK activation during the immune response. This is Dual specificity protein phosphatase MPK-4 from Drosophila melanogaster (Fruit fly).